A 630-amino-acid polypeptide reads, in one-letter code: Plastin-3 (630 aa).

2 consecutive EF-hand domains span residues 12 to 47 (DELD…ANMP) and 52 to 87 (KVRE…VKSS). Residues Asp25, Asn27, Asn29, Glu36, Asp65, Asn67, Asp69, Lys71, and Glu76 each contribute to the Ca(2+) site. Actin-binding stretches follow at residues 109-382 (TSEL…ALTK) and 383-627 (PENQ…GRGM). 2 consecutive Calponin-homology (CH) domains span residues 123–239 (EEEK…KIGL) and 267–378 (LSPE…NKYP). Phosphoserine occurs at positions 268, 293, 326, and 339. Thr391 is subject to Phosphothreonine. Calponin-homology (CH) domains follow at residues 397–506 (TREE…RRYT) and 518–627 (KATD…GRGM).

Monomer.

The protein localises to the cytoplasm. Functionally, actin-bundling protein. This chain is Plastin-3 (Pls3), found in Rattus norvegicus (Rat).